The following is a 561-amino-acid chain: Putative transport protein AHA_2450 (561 aa).

Helical transmembrane passes span 8–28 (LLHQ…LLLG), 37–57 (IGNT…GFEF), 66–86 (FMLF…SVFL), 90–110 (IHYI…TVGL), and 161–181 (NMGI…MLVV). 2 consecutive RCK C-terminal domains span residues 206-291 (SDNE…NYRN) and 293-376 (KEVF…KIGF). The next 5 membrane-spanning stretches (helical) occupy residues 386-406 (LVAF…SLVF), 409-429 (LEFG…MGYL), 450-470 (LGLA…ILDH), 476-496 (AVVL…GYLF), and 541-561 (TYAV…GFWF).

The protein belongs to the AAE transporter (TC 2.A.81) family. YbjL subfamily.

The protein resides in the cell membrane. The protein is Putative transport protein AHA_2450 of Aeromonas hydrophila subsp. hydrophila (strain ATCC 7966 / DSM 30187 / BCRC 13018 / CCUG 14551 / JCM 1027 / KCTC 2358 / NCIMB 9240 / NCTC 8049).